We begin with the raw amino-acid sequence, 410 residues long: FBD-associated F-box protein At5g38590 (410 aa).

The F-box domain maps to 1–47 (MDKINGLPDDLLVKILSYVPTDIAVSTSILSKRWEFLWMWLPNLDYT). Residues 335–385 (GWNQPSSVPECLLSSLQIFKWPQYLGRPEDRDIAVYILKNARHLKKTTILA) form the FBD domain.

The chain is FBD-associated F-box protein At5g38590 from Arabidopsis thaliana (Mouse-ear cress).